The primary structure comprises 274 residues: 2,3,4,5-tetrahydropyridine-2,6-dicarboxylate N-succinyltransferase (274 aa).

2 residues coordinate substrate: R104 and D141.

It belongs to the transferase hexapeptide repeat family. In terms of assembly, homotrimer.

Its subcellular location is the cytoplasm. The enzyme catalyses (S)-2,3,4,5-tetrahydrodipicolinate + succinyl-CoA + H2O = (S)-2-succinylamino-6-oxoheptanedioate + CoA. It functions in the pathway amino-acid biosynthesis; L-lysine biosynthesis via DAP pathway; LL-2,6-diaminopimelate from (S)-tetrahydrodipicolinate (succinylase route): step 1/3. With respect to regulation, inhibited by p-(chloromercuri)benzenesulfonic acid and cobalt. The sequence is that of 2,3,4,5-tetrahydropyridine-2,6-dicarboxylate N-succinyltransferase (dapD) from Unknown prokaryotic organism.